The chain runs to 465 residues: Gamma-aminobutyric acid receptor subunit gamma-1 (465 aa).

The signal sequence occupies residues 1–20; it reads MGSGKAFLFSPSLLWSQTRG. Residues 21-273 lie on the Extracellular side of the membrane; sequence VRLIFLLLTL…FDLSRRMGYF (253 aa). N-linked (GlcNAc...) asparagine glycans are attached at residues Asn50 and Asn127. Cys188 and Cys202 are oxidised to a cystine. Residue Asn245 is glycosylated (N-linked (GlcNAc...) asparagine). Residues 274–294 form a helical membrane-spanning segment; the sequence is TIQTYIPCILTVVLSWVSFWI. At 295 to 300 the chain is on the cytoplasmic side; it reads NKDAVP. The chain crosses the membrane as a helical span at residues 301–320; sequence ARTSLGITTVLTMTTLSTIA. Residues 321 to 328 are Extracellular-facing; that stretch reads RKSLPKVS. A helical transmembrane segment spans residues 329–349; sequence YVTAMDLFVSVCFIFVFAALM. Over 350 to 444 the chain is Cytoplasmic; it reads EYGTLHYFTS…RIAKIDSYSR (95 aa). Residues 445–465 traverse the membrane as a helical segment; the sequence is IFFPTAFALFNLVYWVGYLYL.

It belongs to the ligand-gated ion channel (TC 1.A.9) family. Gamma-aminobutyric acid receptor (TC 1.A.9.5) subfamily. GABRG1 sub-subfamily. Heteropentamer, formed by a combination of alpha (GABRA1-6), beta (GABRB1-3), gamma (GABRG1-3), delta (GABRD), epsilon (GABRE), rho (GABRR1-3), pi (GABRP) and theta (GABRQ) chains, each subunit exhibiting distinct physiological and pharmacological properties. Post-translationally, may be palmitoylated. Expressed in brain.

It is found in the postsynaptic cell membrane. Its subcellular location is the cell membrane. The catalysed reaction is chloride(in) = chloride(out). Its function is as follows. Gamma subunit of the heteropentameric ligand-gated chloride channel gated by gamma-aminobutyric acid (GABA), a major inhibitory neurotransmitter in the brain. GABA-gated chloride channels, also named GABA(A) receptors (GABAAR), consist of five subunits arranged around a central pore and contain GABA active binding site(s) located at the alpha and beta subunit interface(s). When activated by GABA, GABAARs selectively allow the flow of chloride anions across the cell membrane down their electrochemical gradient. Chloride influx into the postsynaptic neuron following GABAAR opening decreases the neuron ability to generate a new action potential, thereby reducing nerve transmission. This chain is Gamma-aminobutyric acid receptor subunit gamma-1, found in Mus musculus (Mouse).